Consider the following 210-residue polypeptide: Guanylate kinase (210 aa).

One can recognise a Guanylate kinase-like domain in the interval 6 to 186 (GLLGIISAPS…ALIYLQSVIL (181 aa)). 13-20 (APSGAGKS) contributes to the ATP binding site.

The protein belongs to the guanylate kinase family.

The protein resides in the cytoplasm. It catalyses the reaction GMP + ATP = GDP + ADP. Essential for recycling GMP and indirectly, cGMP. The protein is Guanylate kinase of Blochmanniella floridana.